Reading from the N-terminus, the 880-residue chain is DNA polymerase I (880 aa).

The 5'-3' exonuclease domain maps to 174–268; sequence TPEQIIDMKG…SGLEYQGFNR (95 aa). Residues 302 to 470 form the 3'-5' exonuclease domain; sequence DINVKTVTDV…LREKLVQELE (169 aa).

Belongs to the DNA polymerase type-A family. In terms of assembly, single-chain monomer with multiple functions.

The catalysed reaction is DNA(n) + a 2'-deoxyribonucleoside 5'-triphosphate = DNA(n+1) + diphosphate. In addition to polymerase activity, this DNA polymerase exhibits 3'-5' and 5'-3' exonuclease activity. The sequence is that of DNA polymerase I (polA) from Bacillus subtilis (strain 168).